The primary structure comprises 111 residues: Translation initiation factor 1A (111 aa).

Basic residues predominate over residues 1–13 (MKKSNNKNNHKNN). The segment at 1–30 (MKKSNNKNNHKNNHNNNQGGENIRVRSPRR) is disordered. One can recognise an S1-like domain in the interval 23–96 (IRVRSPRRGE…EKADVIWRYT (74 aa)).

The protein belongs to the eIF-1A family.

Functionally, seems to be required for maximal rate of protein biosynthesis. Enhances ribosome dissociation into subunits and stabilizes the binding of the initiator Met-tRNA(I) to 40 S ribosomal subunits. The sequence is that of Translation initiation factor 1A from Methanosphaera stadtmanae (strain ATCC 43021 / DSM 3091 / JCM 11832 / MCB-3).